A 329-amino-acid chain; its full sequence is Ketol-acid reductoisomerase (NADP(+)) (329 aa).

A KARI N-terminal Rossmann domain is found at 1–181 (MKVYYENDAD…GATRSGVLQT (181 aa)). NADP(+)-binding positions include 24 to 27 (YGSQ), Arg-47, and 82 to 85 (DQVQ). His-107 is an active-site residue. Gly-133 is an NADP(+) binding site. One can recognise a KARI C-terminal knotted domain in the interval 182–327 (TFREETETDL…GELRKMMSWL (146 aa)). Residues Asp-190, Glu-194, Glu-226, and Glu-230 each coordinate Mg(2+). Ser-251 lines the substrate pocket.

Belongs to the ketol-acid reductoisomerase family. Mg(2+) is required as a cofactor.

It carries out the reaction (2R)-2,3-dihydroxy-3-methylbutanoate + NADP(+) = (2S)-2-acetolactate + NADPH + H(+). The catalysed reaction is (2R,3R)-2,3-dihydroxy-3-methylpentanoate + NADP(+) = (S)-2-ethyl-2-hydroxy-3-oxobutanoate + NADPH + H(+). Its pathway is amino-acid biosynthesis; L-isoleucine biosynthesis; L-isoleucine from 2-oxobutanoate: step 2/4. It participates in amino-acid biosynthesis; L-valine biosynthesis; L-valine from pyruvate: step 2/4. Functionally, involved in the biosynthesis of branched-chain amino acids (BCAA). Catalyzes an alkyl-migration followed by a ketol-acid reduction of (S)-2-acetolactate (S2AL) to yield (R)-2,3-dihydroxy-isovalerate. In the isomerase reaction, S2AL is rearranged via a Mg-dependent methyl migration to produce 3-hydroxy-3-methyl-2-ketobutyrate (HMKB). In the reductase reaction, this 2-ketoacid undergoes a metal-dependent reduction by NADPH to yield (R)-2,3-dihydroxy-isovalerate. This chain is Ketol-acid reductoisomerase (NADP(+)), found in Maridesulfovibrio salexigens (strain ATCC 14822 / DSM 2638 / NCIMB 8403 / VKM B-1763) (Desulfovibrio salexigens).